The following is a 311-amino-acid chain: Aspartate carbamoyltransferase catalytic subunit (311 aa).

Arginine 55 and threonine 56 together coordinate carbamoyl phosphate. Lysine 85 provides a ligand contact to L-aspartate. Arginine 106, histidine 135, and glutamine 138 together coordinate carbamoyl phosphate. L-aspartate-binding residues include arginine 168 and arginine 230. Residues leucine 268 and proline 269 each coordinate carbamoyl phosphate.

Belongs to the aspartate/ornithine carbamoyltransferase superfamily. ATCase family. In terms of assembly, heterododecamer (2C3:3R2) of six catalytic PyrB chains organized as two trimers (C3), and six regulatory PyrI chains organized as three dimers (R2).

It carries out the reaction carbamoyl phosphate + L-aspartate = N-carbamoyl-L-aspartate + phosphate + H(+). The protein operates within pyrimidine metabolism; UMP biosynthesis via de novo pathway; (S)-dihydroorotate from bicarbonate: step 2/3. Its function is as follows. Catalyzes the condensation of carbamoyl phosphate and aspartate to form carbamoyl aspartate and inorganic phosphate, the committed step in the de novo pyrimidine nucleotide biosynthesis pathway. In Yersinia pestis, this protein is Aspartate carbamoyltransferase catalytic subunit.